The sequence spans 508 residues: Monocarboxylate transporter 9 (508 aa).

Residues 1–12 lie on the Cytoplasmic side of the membrane; it reads MEFQKSPDGGWG. 12 helical membrane passes run 13–33, 53–73, 80–100, 102–122, 137–157, 164–184, 303–323, 341–361, 370–390, 396–416, 431–451, and 460–480; these read WVIV…PLAV, WVGS…SLFV, PVTI…SLAP, IYFL…LLYT, GLAL…YAAL, FYGL…ILAC, VFSA…PPSL, MPLI…LGIL, LYLY…IPFA, LAIL…FPYV, GILM…VGWF, and IAFY…LLAI. Residues 481-508 are Cytoplasmic-facing; the sequence is LPCWDMCNKKLPKPAVPTTFFYKVASNV.

This sequence belongs to the major facilitator superfamily. Monocarboxylate porter (TC 2.A.1.13) family.

The protein localises to the cell membrane. It carries out the reaction creatine(in) = creatine(out). The catalysed reaction is (R)-carnitine(in) = (R)-carnitine(out). Extracellular pH-and Na(+)-sensitive low-affinity creatine transporter. Also functions as a pH-independent carnitine efflux transporter. This chain is Monocarboxylate transporter 9 (Slc16a9), found in Mus musculus (Mouse).